A 181-amino-acid polypeptide reads, in one-letter code: Endoribonuclease YbeY (181 aa).

Positions 115, 119, and 125 each coordinate Zn(2+).

It belongs to the endoribonuclease YbeY family. Zn(2+) is required as a cofactor.

The protein resides in the cytoplasm. Its function is as follows. Single strand-specific metallo-endoribonuclease involved in late-stage 70S ribosome quality control and in maturation of the 3' terminus of the 16S rRNA. This Bifidobacterium animalis subsp. lactis (strain AD011) protein is Endoribonuclease YbeY.